The following is a 261-amino-acid chain: 4-phosphopantoate--beta-alanine ligase (261 aa).

ATP-binding positions include arginine 17, arginine 39, 181–183 (DLN), 187–188 (RS), and 199–200 (NI).

It belongs to the archaeal phosphopantothenate synthetase family. As to quaternary structure, homodimer.

The enzyme catalyses (R)-4-phosphopantoate + beta-alanine + ATP = (R)-4'-phosphopantothenate + AMP + diphosphate + H(+). It functions in the pathway cofactor biosynthesis; coenzyme A biosynthesis. With respect to regulation, activity is not affected by 4'-phosphopantothenate or CoA/acetyl-CoA. Catalyzes the condensation of (R)-4-phosphopantoate and beta-alanine to 4'-phosphopantothenate in the CoA biosynthesis pathway. Cannot use (R)-pantoate as substrate and thus does not display pantothenate synthetase (PS) activity. Displays strict specificity for its natural substrates, 4-phosphopantoate, ATP and beta-alanine. The sequence is that of 4-phosphopantoate--beta-alanine ligase from Thermococcus kodakarensis (strain ATCC BAA-918 / JCM 12380 / KOD1) (Pyrococcus kodakaraensis (strain KOD1)).